A 527-amino-acid chain; its full sequence is Putative BTB/POZ domain-containing protein R225 (527 aa).

Residues 16 to 89 (TDLELVLTDP…YGQTNRSTDY (74 aa)) form the BTB domain.

The protein belongs to the mimivirus BTB/WD family.

The sequence is that of Putative BTB/POZ domain-containing protein R225 from Acanthamoeba polyphaga (Amoeba).